The primary structure comprises 556 residues: Dihydroxy-acid dehydratase (556 aa).

D78 is a Mg(2+) binding site. C119 contributes to the [2Fe-2S] cluster binding site. Mg(2+) is bound by residues D120 and K121. K121 is modified (N6-carboxylysine). A [2Fe-2S] cluster-binding site is contributed by C195. E446 contributes to the Mg(2+) binding site. Catalysis depends on S472, which acts as the Proton acceptor.

Belongs to the IlvD/Edd family. As to quaternary structure, homodimer. [2Fe-2S] cluster is required as a cofactor. Mg(2+) serves as cofactor.

The enzyme catalyses (2R)-2,3-dihydroxy-3-methylbutanoate = 3-methyl-2-oxobutanoate + H2O. It catalyses the reaction (2R,3R)-2,3-dihydroxy-3-methylpentanoate = (S)-3-methyl-2-oxopentanoate + H2O. Its pathway is amino-acid biosynthesis; L-isoleucine biosynthesis; L-isoleucine from 2-oxobutanoate: step 3/4. It functions in the pathway amino-acid biosynthesis; L-valine biosynthesis; L-valine from pyruvate: step 3/4. In terms of biological role, functions in the biosynthesis of branched-chain amino acids. Catalyzes the dehydration of (2R,3R)-2,3-dihydroxy-3-methylpentanoate (2,3-dihydroxy-3-methylvalerate) into 2-oxo-3-methylpentanoate (2-oxo-3-methylvalerate) and of (2R)-2,3-dihydroxy-3-methylbutanoate (2,3-dihydroxyisovalerate) into 2-oxo-3-methylbutanoate (2-oxoisovalerate), the penultimate precursor to L-isoleucine and L-valine, respectively. This Desulfatibacillum aliphaticivorans protein is Dihydroxy-acid dehydratase.